Reading from the N-terminus, the 454-residue chain is MSPLQLNGKSRGTSPGNAEPLPIFDALCRSLPVGTADEQFWWKLTGRHLARMMLEAGYPEHRQVECLLFHRFKVVPTFGPQPQSAEPWYRSRVAASAGDGAPISYSWRFGTADRKPYIRNYIEPLGPLTGTAADPNNDVATRAFLQDLTTTLPNLDLSLFWTFEPHLVSRFSDKADREKYAGPSVLTGVELSPDSDAIEIKMYLYPRIPEQISQLLSTIIPKAMREAYGDDVCLDSLNLVKDFLSNHPDGRQLSPRGTTGIDCCKVQDSRVKFYVATNNTSFDHIATVMTIGGRRPLSTEVLDKLRELWYELNGLPSDFPTSEQVPTDQGQEGPSGHHGVGFYYDIQPRLALPDVKAFINVRKHAKSDLAAAETVIGFLERHGQGHHNPRAYLNVLRDIVPAEELETRVGAQAFYSVAVKKEELDITAYFIPQVYRRFASVQVELNGQRRSRFE.

Belongs to the tryptophan dimethylallyltransferase family.

The protein operates within secondary metabolite biosynthesis. Prenyltransferase; part of the gene cluster that mediates the biosynthesis of neosartoricin, a prenylated anthracenone that exhibits T-cell antiproliferative activity, suggestive of a physiological role as an immunosuppressive agent. The non-reducing polyketide synthase nscA probably synthesizes and cyclizes the decaketide backbone. The hydrolase nscB then mediates the product release through hydrolysis followed by spontaneous decarboxylation. The prenyltransferase nscD catalyzes the addition of the dimethylallyl group to the aromatic C5. The FAD-dependent monooxygenase nscC is then responsible for the stereospecific hydroxylation at C2. There is no gene encoding O-acetyltransferase in the nsc gene cluster; thus, the last step of 2-O-acetylation leading to neosartoricin may be catalyzed by an unidentified O-acetyltransferase. The chain is Prenyltransferase nscD from Neosartorya fischeri (strain ATCC 1020 / DSM 3700 / CBS 544.65 / FGSC A1164 / JCM 1740 / NRRL 181 / WB 181) (Aspergillus fischerianus).